The primary structure comprises 377 residues: Probable protein phosphatase 2C 7 (377 aa).

2 disordered regions span residues 1–68 (MAAH…GKAA) and 80–99 (TTVAEATATGPPKGSDEDDE). The span at 21–39 (PPAAEAEAAAAAAAIARAA) shows a compositional bias: low complexity. Residues 51-63 (GVRHPLKHRRFRA) show a composition bias toward basic residues. Residues 80–89 (TTVAEATATG) show a composition bias toward low complexity. The region spanning 115-361 (SCGYSSFRGR…DNITCIVVKF (247 aa)) is the PPM-type phosphatase domain. Mn(2+)-binding residues include aspartate 151, glycine 152, aspartate 313, and aspartate 352.

Belongs to the PP2C family. Requires Mg(2+) as cofactor. It depends on Mn(2+) as a cofactor.

The enzyme catalyses O-phospho-L-seryl-[protein] + H2O = L-seryl-[protein] + phosphate. The catalysed reaction is O-phospho-L-threonyl-[protein] + H2O = L-threonyl-[protein] + phosphate. This is Probable protein phosphatase 2C 7 from Oryza sativa subsp. japonica (Rice).